The chain runs to 164 residues: Transcriptional repressor NrdR (164 aa).

The segment at 3–34 (CPFCRHEDSRVVDSRSLDDGSAIRRRRQCQAC) is a zinc-finger region. The ATP-cone domain maps to 46-136 (LTVVKRSGVA…VYRDFESLDD (91 aa)).

This sequence belongs to the NrdR family. Zn(2+) is required as a cofactor.

Functionally, negatively regulates transcription of bacterial ribonucleotide reductase nrd genes and operons by binding to NrdR-boxes. In Micrococcus luteus (strain ATCC 4698 / DSM 20030 / JCM 1464 / CCM 169 / CCUG 5858 / IAM 1056 / NBRC 3333 / NCIMB 9278 / NCTC 2665 / VKM Ac-2230) (Micrococcus lysodeikticus), this protein is Transcriptional repressor NrdR.